Consider the following 777-residue polypeptide: 5-methyltetrahydropteroyltriglutamate--homocysteine methyltransferase (777 aa).

5-methyltetrahydropteroyltri-L-glutamate-binding positions include 17 to 20 (RELK) and K132. Residues 455-457 (IGS) and E508 contribute to the L-homocysteine site. Residues 455–457 (IGS) and E508 each bind L-methionine. 5-methyltetrahydropteroyltri-L-glutamate-binding positions include 539-540 (RC) and W585. D623 is a binding site for L-homocysteine. L-methionine is bound at residue D623. 5-methyltetrahydropteroyltri-L-glutamate is bound at residue E629. Residues H665, C667, and E689 each coordinate Zn(2+). Catalysis depends on H718, which acts as the Proton donor. C750 contacts Zn(2+).

Belongs to the vitamin-B12 independent methionine synthase family. Zn(2+) is required as a cofactor.

It catalyses the reaction 5-methyltetrahydropteroyltri-L-glutamate + L-homocysteine = tetrahydropteroyltri-L-glutamate + L-methionine. It functions in the pathway amino-acid biosynthesis; L-methionine biosynthesis via de novo pathway; L-methionine from L-homocysteine (MetE route): step 1/1. Its function is as follows. Catalyzes the transfer of a methyl group from 5-methyltetrahydrofolate to homocysteine resulting in methionine formation. The polypeptide is 5-methyltetrahydropteroyltriglutamate--homocysteine methyltransferase (Caulobacter vibrioides (strain ATCC 19089 / CIP 103742 / CB 15) (Caulobacter crescentus)).